We begin with the raw amino-acid sequence, 359 residues long: Prostaglandin F2-alpha receptor (359 aa).

At 1-31 the chain is on the extracellular side; it reads MSMNNSKQLVSPAAALLSNTTCQTENRLSVF. Residues Asn-4 and Asn-19 are each glycosylated (N-linked (GlcNAc...) asparagine). Residues 32–54 traverse the membrane as a helical segment; sequence FSVIFMTVGILSNSLAIAILMKA. Topologically, residues 55-69 are cytoplasmic; sequence YQRFRQKSKASFLLL. A helical membrane pass occupies residues 70–90; it reads ASGLVITDFFGHLINGAIAVF. At 91-109 the chain is on the extracellular side; sequence VYASDKEWIRFDQSNVLCS. Cysteines 108 and 186 form a disulfide. A helical membrane pass occupies residues 110-131; the sequence is IFGICMVFSGLCPLLLGSVMAI. Over 132-152 the chain is Cytoplasmic; that stretch reads ERCIGVTKPIFHSTKITSKHV. A helical transmembrane segment spans residues 153-175; it reads KMMLSGVCLFAVFIALLPILGHR. At 176 to 198 the chain is on the extracellular side; the sequence is DYKIQASRTWCFYNTEDIKDWED. Residues 199-224 form a helical membrane-spanning segment; sequence RFYLLLFSFLGLLALGVSLLCNAITG. At 225–250 the chain is on the cytoplasmic side; that stretch reads ITLLRVKFKSQQHRQGRSHHLEMVIQ. A helical transmembrane segment spans residues 251 to 267; the sequence is LLAIMCVSCICWSPFLV. Residues 268-285 are Extracellular-facing; that stretch reads TMANIGINGNHSLETCET. The chain crosses the membrane as a helical span at residues 286 to 307; sequence TLFALRMATWNQILDPWVYILL. At 308–359 the chain is on the cytoplasmic side; the sequence is RKAVLKNLYKLASQCCGVHVISLHIWELSSIKNSLKVAAISESPVAEKSAST.

It belongs to the G-protein coupled receptor 1 family. As to quaternary structure, isoform 1 can form heterodimers with isoform 5 (and probably other isoforms). Eye.

The protein resides in the cell membrane. Its function is as follows. Receptor for prostaglandin F2-alpha (PGF2-alpha). The activity of this receptor is mediated by G proteins which activate a phosphatidylinositol-calcium second messenger system. Initiates luteolysis in the corpus luteum. Isoforms 2 to 7 do not bind PGF2-alpha but are proposed to modulate signaling by participating in variant receptor complexes; heterodimers between isoform 1 and isoform 5 are proposed to be a receptor for prostamides including the synthetic analog bimatoprost. The sequence is that of Prostaglandin F2-alpha receptor (PTGFR) from Homo sapiens (Human).